Reading from the N-terminus, the 436-residue chain is Glutamate-1-semialdehyde 2,1-aminomutase (436 aa).

The residue at position 272 (Lys-272) is an N6-(pyridoxal phosphate)lysine.

It belongs to the class-III pyridoxal-phosphate-dependent aminotransferase family. HemL subfamily. In terms of assembly, homodimer. Pyridoxal 5'-phosphate is required as a cofactor.

The protein localises to the cytoplasm. The enzyme catalyses (S)-4-amino-5-oxopentanoate = 5-aminolevulinate. It participates in porphyrin-containing compound metabolism; protoporphyrin-IX biosynthesis; 5-aminolevulinate from L-glutamyl-tRNA(Glu): step 2/2. It functions in the pathway porphyrin-containing compound metabolism; chlorophyll biosynthesis. In Methylibium petroleiphilum (strain ATCC BAA-1232 / LMG 22953 / PM1), this protein is Glutamate-1-semialdehyde 2,1-aminomutase.